A 315-amino-acid chain; its full sequence is Protein sprouty homolog 2 (315 aa).

Positions 1-14 are enriched in polar residues; it reads MEARAQSGSGSQPL. Disordered stretches follow at residues 1-38 and 51-140; these read MEARAQSGSGSQPLLQAPRDSGRQRGEPDPRDALPQQV and NTNE…GSSF. The segment covering 20–32 has biased composition (basic and acidic residues); sequence DSGRQRGEPDPRD. Over residues 88–100 the composition is skewed to pro residues; that stretch reads PRQPSRPQHPPAH. The span at 109–140 shows a compositional bias: low complexity; the sequence is RSISTVSSGSRSSTRTSTSSSSSEQRLLGSSF. The required for interaction with CAV1 stretch occupies residues 118–315; sequence SRSSTRTSTS…VPPRNFEKPT (198 aa). One can recognise an SPR domain in the interval 177-291; sequence KCEDCGKCKC…CYDRVNRPGC (115 aa). The tract at residues 178–315 is required for interaction with TESK1; sequence CEDCGKCKCK…VPPRNFEKPT (138 aa).

This sequence belongs to the sprouty family. As to quaternary structure, forms heterodimers with SPRY1. Forms a tripartite complex containing GAB1, METTL13 and SPRY2. Within the complex interacts with METTL13. Interacts with RAF1. Interacts (via C-terminus) with TESK1 (via C-terminus); the interaction disrupts SPRY2 interaction with GRB2, potentially via disruption of SPRY2 serine dephosphorylation. Interacts with PPP2R1A/PP2A-A and PPP2CA/PP2A-C; the interaction with PPP2CA/PP2A-C is inhibited by interaction with TESK1, possibly by vesicular sequestration of SPRY2. Inhibition of the interaction with the serine/threonine-protein phosphatase 2A (PP2A) holoenzyme results in loss of PP2A-mediated dephosphorylation, resulting in the loss of SPRY2 interaction with GRB2. Interacts with GRB2. Interacts with CBL/C-CBL; the interaction inhibits CBL-mediated ubiquitination of EGFR. Interacts (via C-terminus) with CAV1 (via C-terminus). Cleaved at Pro-144 by the prolyl endopeptidase FAP (seprase) activity (in vitro).

The protein resides in the cytoplasm. The protein localises to the cytoskeleton. Its subcellular location is the cell projection. It localises to the ruffle membrane. Antagonist of fibroblast growth factor (FGF) pathways via inhibition of FGF-mediated phosphorylation of ERK1/2. Thereby acts as an antagonist of FGF-induced retinal lens fiber differentiation, may inhibit limb bud outgrowth and may negatively modulate respiratory organogenesis. Inhibits TGFB-induced epithelial-to-mesenchymal transition in retinal lens epithelial cells. Inhibits CBL/C-CBL-mediated EGFR ubiquitination. This Bos taurus (Bovine) protein is Protein sprouty homolog 2 (SPRY2).